We begin with the raw amino-acid sequence, 209 residues long: Ribosome maturation factor RimP (209 aa).

The protein belongs to the RimP family.

It is found in the cytoplasm. Its function is as follows. Required for maturation of 30S ribosomal subunits. This Bartonella bacilliformis (strain ATCC 35685 / KC583 / Herrer 020/F12,63) protein is Ribosome maturation factor RimP.